The sequence spans 192 residues: Lipid A acyltransferase PagP (192 aa).

An N-terminal signal peptide occupies residues 1–26; it reads MTVVNKSFLTILIFFCQILFPLNASA. Residues histidine 64, aspartate 107, and serine 108 contribute to the active site.

This sequence belongs to the lipid A palmitoyltransferase family. Homodimer.

The protein resides in the cell outer membrane. It catalyses the reaction a lipid A + a 1,2-diacyl-sn-glycero-3-phosphocholine = a hepta-acyl lipid A + a 2-acyl-sn-glycero-3-phosphocholine. It carries out the reaction a lipid IVA + a 1,2-diacyl-sn-glycero-3-phosphocholine = a lipid IVB + a 2-acyl-sn-glycero-3-phosphocholine. The enzyme catalyses a lipid IIA + a 1,2-diacyl-sn-glycero-3-phosphocholine = a lipid IIB + a 2-acyl-sn-glycero-3-phosphocholine. Transfers a fatty acid residue from the sn-1 position of a phospholipid to the N-linked hydroxyfatty acid chain on the proximal unit of lipid A or its precursors. This is Lipid A acyltransferase PagP from Cronobacter sakazakii (strain ATCC BAA-894) (Enterobacter sakazakii).